A 132-amino-acid polypeptide reads, in one-letter code: Small ribosomal subunit protein uS8 (132 aa).

This sequence belongs to the universal ribosomal protein uS8 family. Part of the 30S ribosomal subunit. Contacts proteins S5 and S12.

In terms of biological role, one of the primary rRNA binding proteins, it binds directly to 16S rRNA central domain where it helps coordinate assembly of the platform of the 30S subunit. This chain is Small ribosomal subunit protein uS8, found in Streptococcus mutans serotype c (strain ATCC 700610 / UA159).